The chain runs to 523 residues: 2-isopropylmalate synthase (523 aa).

Residues 5–267 enclose the Pyruvate carboxyltransferase domain; the sequence is VIIFDTTLRD…HTAINHQEIW (263 aa). Mn(2+)-binding residues include D14, H202, H204, and N238. The regulatory domain stretch occupies residues 392-523; it reads RLDYFSVQSG…QHNENNKETV (132 aa).

This sequence belongs to the alpha-IPM synthase/homocitrate synthase family. LeuA type 1 subfamily. Homodimer. Mn(2+) is required as a cofactor.

The protein localises to the cytoplasm. It catalyses the reaction 3-methyl-2-oxobutanoate + acetyl-CoA + H2O = (2S)-2-isopropylmalate + CoA + H(+). It functions in the pathway amino-acid biosynthesis; L-leucine biosynthesis; L-leucine from 3-methyl-2-oxobutanoate: step 1/4. Catalyzes the condensation of the acetyl group of acetyl-CoA with 3-methyl-2-oxobutanoate (2-ketoisovalerate) to form 3-carboxy-3-hydroxy-4-methylpentanoate (2-isopropylmalate). This is 2-isopropylmalate synthase from Escherichia coli (strain SMS-3-5 / SECEC).